An 877-amino-acid chain; its full sequence is Leucine--tRNA ligase (877 aa).

The short motif at 43 to 53 (PYPSGRIHMGH) is the 'HIGH' region element. The 'KMSKS' region signature appears at 628-632 (KMSKS). Position 631 (Lys631) interacts with ATP.

The protein belongs to the class-I aminoacyl-tRNA synthetase family.

It is found in the cytoplasm. It catalyses the reaction tRNA(Leu) + L-leucine + ATP = L-leucyl-tRNA(Leu) + AMP + diphosphate. This Brucella abortus (strain S19) protein is Leucine--tRNA ligase.